Here is a 481-residue protein sequence, read N- to C-terminus: MQITREKWSKNFSEWFDWVLREGEFYDYGRYPVKGMGVWMPYGFKLRQNIISIIRNLLDSTGHEEVLFPLLIPEDLLSRESTHIKGFEEEVFWVTKGGSEDLDVKLALRPTSEVAITTMENLWLKSYKQLPKKYYQIVSVFRYETKATRPMIRLREITTFKEAHTVHETYDDAQRQVEEAIEIYKKIFNNLAIPYVLSERPEWDRFAGALHTYAFDTIMPDGKVMQIGTVHHLGQNFSRALDFKIQKKDGSLDYPHQTSYGISDRAIASVIAIHGDDHGPILPPSVAPIKVVVVPIPAKNEEGTQQVMKYSVEICEMLNKNNITCVTDQDTEKTPGEKFYIWEIKGVPIRLEIGPRELASSTVFIKRRDNLKSYTVKKEEVVNKVKEVLNEIQEDLRKRAWESLKSRIEYANDIEKAKNLLENNSGIVEVPWCGSKECGLKIEELTNARVLGYPIEDRKVNDKCVICKMNAKTVLRVAKTY.

The protein belongs to the class-II aminoacyl-tRNA synthetase family. ProS type 3 subfamily. Homodimer.

It is found in the cytoplasm. It carries out the reaction tRNA(Pro) + L-proline + ATP = L-prolyl-tRNA(Pro) + AMP + diphosphate. Functionally, catalyzes the attachment of proline to tRNA(Pro) in a two-step reaction: proline is first activated by ATP to form Pro-AMP and then transferred to the acceptor end of tRNA(Pro). This chain is Proline--tRNA ligase, found in Saccharolobus islandicus (strain M.16.27) (Sulfolobus islandicus).